Consider the following 540-residue polypeptide: Protein GDAP2 homolog (540 aa).

Residues 56-235 enclose the Macro domain; that stretch reads RSPFPLCKDV…TYEVLAPLYF (180 aa). The CRAL-TRIO domain occupies 371–528; sequence QVEDLTEVSG…YITEYDMATN (158 aa).

The protein belongs to the GDAP2 family.

This Drosophila melanogaster (Fruit fly) protein is Protein GDAP2 homolog.